Consider the following 345-residue polypeptide: tRNA-specific 2-thiouridylase MnmA 1 (345 aa).

ATP contacts are provided by residues 9 to 16 (GMSGGIDS) and Leu-35. Cys-96 acts as the Nucleophile in catalysis. Cys-96 and Cys-191 are joined by a disulfide. Gly-120 is a binding site for ATP. The segment at 138–140 (KDQ) is interaction with tRNA. Cys-191 functions as the Cysteine persulfide intermediate in the catalytic mechanism. Residues 293–294 (RY) are interaction with tRNA.

This sequence belongs to the MnmA/TRMU family.

Its subcellular location is the cytoplasm. It carries out the reaction S-sulfanyl-L-cysteinyl-[protein] + uridine(34) in tRNA + AH2 + ATP = 2-thiouridine(34) in tRNA + L-cysteinyl-[protein] + A + AMP + diphosphate + H(+). In terms of biological role, catalyzes the 2-thiolation of uridine at the wobble position (U34) of tRNA, leading to the formation of s(2)U34. This is tRNA-specific 2-thiouridylase MnmA 1 from Aliarcobacter butzleri (strain RM4018) (Arcobacter butzleri).